Consider the following 209-residue polypeptide: tRNA (guanine-N(7)-)-methyltransferase (209 aa).

Residues Asp-35, Glu-60, Asn-87, and Asp-113 each contribute to the S-adenosyl-L-methionine site. The active site involves Asp-113. Residues Lys-117 and Asp-149 each coordinate substrate.

This sequence belongs to the class I-like SAM-binding methyltransferase superfamily. TrmB family.

The enzyme catalyses guanosine(46) in tRNA + S-adenosyl-L-methionine = N(7)-methylguanosine(46) in tRNA + S-adenosyl-L-homocysteine. Its pathway is tRNA modification; N(7)-methylguanine-tRNA biosynthesis. Catalyzes the formation of N(7)-methylguanine at position 46 (m7G46) in tRNA. The polypeptide is tRNA (guanine-N(7)-)-methyltransferase (Prochlorococcus marinus subsp. pastoris (strain CCMP1986 / NIES-2087 / MED4)).